Consider the following 694-residue polypeptide: Prolyl 3-hydroxylase 2 (694 aa).

The signal sequence occupies residues 1–23; that stretch reads MAPGSRSWGAVLLLAAMLPAACG. TPR repeat units follow at residues 35-68, 136-169, 196-229, and 292-325; these read FDALYASGVEAYYGGDFAGAARCLEQALRSRREL, RVPYSYLQRAYIQLNKLEEAANAAHTFFMANPEH, HMEDYSAGVRHYDKEEYGLAITFLERALEGYYAE, and PLHYDYLQFAYYRVGDYVKALECARSYLLFHPDD. A coiled-coil region spans residues 386–418; sequence KRYGARQDEHSVPSSISSEPEDGPRLSLTKKPT. Positions 395–427 are disordered; it reads HSVPSSISSEPEDGPRLSLTKKPTPKPDRELKE. 2 N-linked (GlcNAc...) asparagine glycosylation sites follow: asparagine 446 and asparagine 535. The Fe2OG dioxygenase domain occupies 543–657; that stretch reads THLVCRTALS…RCAVALWFTL (115 aa). 3 residues coordinate Fe cation: histidine 566, aspartate 568, and histidine 638. Arginine 648 is an active-site residue. The short motif at 691–694 is the Prevents secretion from ER element; sequence KDEL.

It belongs to the leprecan family. It depends on Fe cation as a cofactor. The cofactor is L-ascorbate.

The protein localises to the endoplasmic reticulum. The protein resides in the sarcoplasmic reticulum. Its subcellular location is the golgi apparatus. It catalyses the reaction L-prolyl-[collagen] + 2-oxoglutarate + O2 = trans-3-hydroxy-L-prolyl-[collagen] + succinate + CO2. Prolyl 3-hydroxylase that catalyzes the post-translational formation of 3-hydroxyproline on collagens. Contributes to proline 3-hydroxylation of collagen COL4A1 and COL1A1 in tendons, the eye sclera and in the eye lens capsule. Has high activity with the type IV collagen COL4A1, and lower activity with COL1A1. Catalyzes hydroxylation of the first Pro in Gly-Pro-Hyp sequences where Hyp is 4-hydroxyproline. Has no activity on substrates that lack 4-hydroxyproline in the third position. This is Prolyl 3-hydroxylase 2 from Gallus gallus (Chicken).